Here is a 285-residue protein sequence, read N- to C-terminus: Probable endonuclease 4 (285 aa).

The Zn(2+) site is built by H69, H109, E145, D179, H182, H216, D229, H231, and E261.

This sequence belongs to the AP endonuclease 2 family. Zn(2+) serves as cofactor.

The enzyme catalyses Endonucleolytic cleavage to 5'-phosphooligonucleotide end-products.. Endonuclease IV plays a role in DNA repair. It cleaves phosphodiester bonds at apurinic or apyrimidinic (AP) sites, generating a 3'-hydroxyl group and a 5'-terminal sugar phosphate. This is Probable endonuclease 4 from Shigella boydii serotype 18 (strain CDC 3083-94 / BS512).